The following is an 89-amino-acid chain: MSITTEEKARVMKEYGTKDGDTGSPEVQVAILSSRIATLTEHFKTHKKDNHGRRGLLKLVAQRRKLLDYLKAKDEARYQSLIERLGLRR.

Residues 1-21 are compositionally biased toward basic and acidic residues; sequence MSITTEEKARVMKEYGTKDGD. The disordered stretch occupies residues 1–24; that stretch reads MSITTEEKARVMKEYGTKDGDTGS.

Belongs to the universal ribosomal protein uS15 family. In terms of assembly, part of the 30S ribosomal subunit. Forms a bridge to the 50S subunit in the 70S ribosome, contacting the 23S rRNA.

Its function is as follows. One of the primary rRNA binding proteins, it binds directly to 16S rRNA where it helps nucleate assembly of the platform of the 30S subunit by binding and bridging several RNA helices of the 16S rRNA. In terms of biological role, forms an intersubunit bridge (bridge B4) with the 23S rRNA of the 50S subunit in the ribosome. The sequence is that of Small ribosomal subunit protein uS15 from Ruegeria pomeroyi (strain ATCC 700808 / DSM 15171 / DSS-3) (Silicibacter pomeroyi).